A 384-amino-acid polypeptide reads, in one-letter code: Dual specificity protein phosphatase 5 (384 aa).

The region spanning 19 to 141 (AEARCVVLDC…FYSQYPECCV (123 aa)) is the Rhodanese domain. A Nuclear localization signal motif is present at residues 53–74 (RRARGGAVSARYVLADEAARAR). The Tyrosine-protein phosphatase domain occupies 178–319 (GPVEILPFLY…LLQYESEILP (142 aa)). Cysteine 263 functions as the Phosphocysteine intermediate in the catalytic mechanism.

It belongs to the protein-tyrosine phosphatase family. Non-receptor class dual specificity subfamily.

It localises to the nucleus. The catalysed reaction is O-phospho-L-tyrosyl-[protein] + H2O = L-tyrosyl-[protein] + phosphate. It catalyses the reaction O-phospho-L-seryl-[protein] + H2O = L-seryl-[protein] + phosphate. It carries out the reaction O-phospho-L-threonyl-[protein] + H2O = L-threonyl-[protein] + phosphate. In terms of biological role, dual specificity protein phosphatase; active with phosphotyrosine, phosphoserine and phosphothreonine residues. The highest relative activity is toward ERK1. In Rattus norvegicus (Rat), this protein is Dual specificity protein phosphatase 5 (Dusp5).